We begin with the raw amino-acid sequence, 623 residues long: MTIRSLPAALSPLSMAVQAVLLVSSLALAPAANAKPVTWEDIANDHLNTQNVLQYGMGTNAQRWSPLAMVNDKNVFKLTPAWSYSFGDERQRGQESQAIINDGVIYVTGSYSRVFALDAKTGRRLWTYNHRLPDNIRPCCDVVNRGAAIFGDKIYFGTLDARVIALNKDTGKVVWNKKFGDHSAGYTMTGAPTLIKDQKSGKVLLIHGSSGDEFGVVGQLYARDPETGEEVWMRPFVEGHMGRLNGKDSTPTGDVKAPSWPDDPTTETGKVESWSHGGGAPWQSASFDPETNTIIVGAGNPGPWNTWARTSKDGNPHDFDSLYTSGQVGVDPTTGEVKWFYQHTPNDAWDFSGNNELVLFDYKDKDGKQYKATAHADRNGFFYVVDRTNGKLKNAFPFVDNITWASHIDLKTGRPVENEGQRPAKPLPGETKGKPVEVSPPFLGGKNWNPMAYSQDTGLFYVPANHWKEEYWTEEVNYKKGSAYLGIGFRIKRMYEDHVGSLRAMDPTTGKVVWEHNERLPLWAGVLATKGNLVFTGTGDGYFKAFNAKTGEELWKFQTGSGIVSPPITWEQDGEQYIGVTVGYGGAVPLWGGDMAELTKPVAQGGSFWVFKIPAWDTKTAKR.

A signal peptide spans 1–34 (MTIRSLPAALSPLSMAVQAVLLVSSLALAPAANA). Ca(2+)-binding residues include D45 and N51. E95 provides a ligand contact to pyrroloquinoline quinone. The cysteines at positions 139 and 140 are disulfide-linked. Residues R145, T189, and 207 to 209 (HGS) contribute to the pyrroloquinoline quinone site. A Ca(2+)-binding site is contributed by E213. The disordered stretch occupies residues 242–279 (GRLNGKDSTPTGDVKAPSWPDDPTTETGKVESWSHGGG). Residues N300 and D350 each coordinate Ca(2+). The active-site Proton acceptor is the D350. R378 lines the pyrroloquinoline quinone pocket. Residues 414 to 436 (RPVENEGQRPAKPLPGETKGKPV) form a disordered region. 2 WD repeats span residues 515-556 (EHNE…ELWK) and 559-601 (TGSG…LTKP). 2 residues coordinate pyrroloquinoline quinone: W523 and A587.

The protein belongs to the bacterial PQQ dehydrogenase family. In terms of assembly, homodimer. The cofactor is pyrroloquinoline quinone. It depends on Ca(2+) as a cofactor.

It is found in the periplasm. The catalysed reaction is a primary alcohol + 2 Fe(III)-[cytochrome c] = an aldehyde + 2 Fe(II)-[cytochrome c] + 2 H(+). The enzyme catalyses ethanol + 2 Fe(III)-[cytochrome c] = acetaldehyde + 2 Fe(II)-[cytochrome c] + 2 H(+). It catalyses the reaction ethanol + A = acetaldehyde + AH2. It carries out the reaction 1-propanol + 2 Fe(III)-[cytochrome c] = propanal + 2 Fe(II)-[cytochrome c] + 2 H(+). Its pathway is alcohol metabolism; ethanol degradation; acetate from ethanol: step 1/2. With respect to regulation, enhanced by the presence of ethylamine or NH4(+) ions. In terms of biological role, catalyzes the oxidation of ethanol and other primary alcohols to the corresponding aldehydes, except methanol, which is not a substrate. Uses a specific inducible cytochrome c550, encoded by the adjacent gene in the locus, as electron acceptor. Is a key enzyme of the carbon and energy metabolism during growth of P.putida on ethanol as the sole carbon and energy source. Displays lower activity on secondary alcohols, aldehydes and diols. Is not active with sugar alcohols such as glycerol and D-sorbitol. In vitro, reacts well with phenazine methosulfate (PMS) as an electron acceptor but not with NAD(P), potassium ferricyanide, or molecular oxygen. In Pseudomonas putida (Arthrobacter siderocapsulatus), this protein is Quinoprotein ethanol dehydrogenase.